Here is a 299-residue protein sequence, read N- to C-terminus: MSEAVGIVVALQANYLEVELDQAPEQGLSRLLCTRRTRLSHRGETVHVGDRVRVEAIDPVQARAVVSGVEPRCSWLTRPQVANVSLVVVALAVDQPAFDPDQASRFLLTAERTGLPVQLLLTKGDLMEEHQRFALVERLMGWGYDSLVVSSQTGEGVEVLSQRLKDTELAVLCGPSGVGKSSVLNCLMPHLALRVGAVSGRLQRGRHTTRHVELFPIAPGSRVADTPGFNRPDLPDDPSELGMLFPELRVQLSPWPCRFRDCLHRQEPGCGINREWERFEFYKDALQECSDLSRPSRAG.

The CP-type G domain occupies 73 to 232 (CSWLTRPQVA…VADTPGFNRP (160 aa)). GTP contacts are provided by residues 122-125 (TKGD) and 174-182 (GPSGVGKSS). The Zn(2+) site is built by Cys257, Cys262, His264, and Cys270.

This sequence belongs to the TRAFAC class YlqF/YawG GTPase family. RsgA subfamily. Monomer. Associates with 30S ribosomal subunit, binds 16S rRNA. The cofactor is Zn(2+).

Its subcellular location is the cytoplasm. One of several proteins that assist in the late maturation steps of the functional core of the 30S ribosomal subunit. Helps release RbfA from mature subunits. May play a role in the assembly of ribosomal proteins into the subunit. Circularly permuted GTPase that catalyzes slow GTP hydrolysis, GTPase activity is stimulated by the 30S ribosomal subunit. The polypeptide is Small ribosomal subunit biogenesis GTPase RsgA (Parasynechococcus marenigrum (strain WH8102)).